A 743-amino-acid chain; its full sequence is Catalase-peroxidase (743 aa).

The interval M1–C22 is disordered. Residues W105–Y227 constitute a cross-link (tryptophyl-tyrosyl-methioninium (Trp-Tyr) (with M-253)). Catalysis depends on H106, which acts as the Proton acceptor. The segment at residues Y227–M253 is a cross-link (tryptophyl-tyrosyl-methioninium (Tyr-Met) (with W-105)). H268 serves as a coordination point for heme b.

Belongs to the peroxidase family. Peroxidase/catalase subfamily. Homodimer or homotetramer. Heme b serves as cofactor. Post-translationally, formation of the three residue Trp-Tyr-Met cross-link is important for the catalase, but not the peroxidase activity of the enzyme.

The enzyme catalyses H2O2 + AH2 = A + 2 H2O. It catalyses the reaction 2 H2O2 = O2 + 2 H2O. Its function is as follows. Bifunctional enzyme with both catalase and broad-spectrum peroxidase activity. In Solibacter usitatus (strain Ellin6076), this protein is Catalase-peroxidase.